Consider the following 490-residue polypeptide: Cytochrome P450 2C54 (490 aa).

Serine 127 carries the phosphoserine modification. N6-acetyllysine is present on residues lysine 252 and lysine 375. Cysteine 435 contacts heme.

The protein belongs to the cytochrome P450 family. Heme is required as a cofactor. Expressed in liver.

The protein localises to the endoplasmic reticulum membrane. It is found in the microsome membrane. The enzyme catalyses an organic molecule + reduced [NADPH--hemoprotein reductase] + O2 = an alcohol + oxidized [NADPH--hemoprotein reductase] + H2O + H(+). Its function is as follows. Metabolizes arachidonic acid mainly to 12-hydroxyeicosatetraenoic acid (HETE). This Mus musculus (Mouse) protein is Cytochrome P450 2C54.